A 177-amino-acid chain; its full sequence is Large ribosomal subunit protein uL6 (177 aa).

The disordered stretch occupies residues 154 to 177 (PEPYKGKGVRYADEQVRRKEAKKK). Residues 155–171 (EPYKGKGVRYADEQVRR) are compositionally biased toward basic and acidic residues.

Belongs to the universal ribosomal protein uL6 family. Part of the 50S ribosomal subunit.

Its function is as follows. This protein binds to the 23S rRNA, and is important in its secondary structure. It is located near the subunit interface in the base of the L7/L12 stalk, and near the tRNA binding site of the peptidyltransferase center. In Alcanivorax borkumensis (strain ATCC 700651 / DSM 11573 / NCIMB 13689 / SK2), this protein is Large ribosomal subunit protein uL6.